The chain runs to 283 residues: MNELNVVNDINHAGNWLIRNQELLFGYVINLTSAIIILISGMFIAKIISNGVNQILITRHIDATIAGFLSALMRYIIITFTLIASLGRIGVQTTSVIAILGAAGMAIGLALQGSLSNFAAGVLLVTLRPLKTGEYVNLGNVAGTVLNIHIFYTTLRTLDGKIVVVPNNKIISGNIINYSREPARRNEFSISVSYNTDIDLVIKVLKRVIENEDRVMKDRDIVIGLSELAPSSLNFIIRCWSSTDELNAVYWDLMVKFKKELDKNNINIPYPQIDVHLYKKNKN.

Helical transmembrane passes span 24 to 44 (LFGY…GMFI), 64 to 84 (TIAG…TLIA), and 96 to 116 (VIAI…GSLS).

The protein belongs to the MscS (TC 1.A.23) family.

Its subcellular location is the cell membrane. This is an uncharacterized protein from Buchnera aphidicola subsp. Schizaphis graminum (strain Sg).